The sequence spans 327 residues: Cobalamin biosynthesis protein CobD (327 aa).

4 helical membrane passes run 60 to 80 (GMWLTIGLVMACVVLGLVLEL), 82 to 102 (LPFAGTAGAVAEILIVTVLLA), 159 to 179 (DGIVAPAFWFLVGGLPGLFAY), and 304 to 324 (LFWSTMSLMTGLVIAASLIGL).

Belongs to the CobD/CbiB family.

It localises to the cell membrane. It participates in cofactor biosynthesis; adenosylcobalamin biosynthesis. Functionally, converts cobyric acid to cobinamide by the addition of aminopropanol on the F carboxylic group. This Brucella anthropi (strain ATCC 49188 / DSM 6882 / CCUG 24695 / JCM 21032 / LMG 3331 / NBRC 15819 / NCTC 12168 / Alc 37) (Ochrobactrum anthropi) protein is Cobalamin biosynthesis protein CobD.